Reading from the N-terminus, the 563-residue chain is Probable Xaa-Pro aminopeptidase PEPP (563 aa).

Positions 331, 342, 491, and 532 each coordinate Mn(2+).

This sequence belongs to the peptidase M24B family. The cofactor is Mn(2+).

It catalyses the reaction Release of any N-terminal amino acid, including proline, that is linked to proline, even from a dipeptide or tripeptide.. Functionally, catalyzes the removal of a penultimate prolyl residue from the N-termini of peptides. In Verticillium alfalfae (strain VaMs.102 / ATCC MYA-4576 / FGSC 10136) (Verticillium wilt of alfalfa), this protein is Probable Xaa-Pro aminopeptidase PEPP (PEPP).